The primary structure comprises 122 residues: Large ribosomal subunit protein uL14 (122 aa).

This sequence belongs to the universal ribosomal protein uL14 family. Part of the 50S ribosomal subunit. Forms a cluster with proteins L3 and L19. In the 70S ribosome, L14 and L19 interact and together make contacts with the 16S rRNA in bridges B5 and B8.

Its function is as follows. Binds to 23S rRNA. Forms part of two intersubunit bridges in the 70S ribosome. This chain is Large ribosomal subunit protein uL14, found in Desulfatibacillum aliphaticivorans.